The chain runs to 353 residues: Quinolinate synthase (353 aa).

Residues His-47 and Ser-68 each contribute to the iminosuccinate site. Cys-113 contributes to the [4Fe-4S] cluster binding site. Iminosuccinate-binding positions include 139-141 (YAN) and Ser-156. Cys-200 is a [4Fe-4S] cluster binding site. Iminosuccinate contacts are provided by residues 226-228 (HPE) and Thr-243. Cys-297 contacts [4Fe-4S] cluster.

The protein belongs to the quinolinate synthase family. Type 1 subfamily. The cofactor is [4Fe-4S] cluster.

The protein resides in the cytoplasm. It catalyses the reaction iminosuccinate + dihydroxyacetone phosphate = quinolinate + phosphate + 2 H2O + H(+). It functions in the pathway cofactor biosynthesis; NAD(+) biosynthesis; quinolinate from iminoaspartate: step 1/1. In terms of biological role, catalyzes the condensation of iminoaspartate with dihydroxyacetone phosphate to form quinolinate. This Pectobacterium carotovorum subsp. carotovorum (strain PC1) protein is Quinolinate synthase.